Reading from the N-terminus, the 415-residue chain is PRKCA-binding protein (415 aa).

Positions 22–105 constitute a PDZ domain; that stretch reads KVTLQKDAQN…EVTIHYNKLQ (84 aa). Cysteine 44 and cysteine 46 together coordinate Zn(2+). Threonine 82 carries the phosphothreonine modification. The AH domain maps to 144–357; sequence LCNDGLVKRL…CYAVLRDADV (214 aa). The interval 376-415 is disordered; sequence EEFTDGEEEEEEEDTAAGEPSRDTRGAAGPLDKGGSWCDS. Positions 377–391 are enriched in acidic residues; sequence EFTDGEEEEEEEDTA. The S-palmitoyl cysteine; by DHHC8 moiety is linked to residue cysteine 413.

In terms of assembly, monomer and homodimer. Interacts with CXADR. Interacts presynaptically with the glutamate receptors GRIA2, GRIA3, GRIK3, isoform 3 of GRIA4, isoform A of GRM4, GRM7 and GRM8; with NAPA and NAPB; and with BTG2. The interaction with NAPA and NAPB disrupts the interaction with GRIA2, conducting to the internalization of GRIA2. Interacts with PRKCA; with the amine transporters SLC6A2 and SLC6A3; with the channels ASIC1 and ASIC2; with the GTP-binding proteins ARF1 and ARF3; with the ephrin receptor tyrosine kinases EPHA7, EPHB1 and EPHB2; with ERBB2 and through its PDZ domain with the C-terminal tail of PRLHR. Interacts with UNC5A. Interacts (via AH domain) with NCS1/FREQ; in a calcium-dependent manner. Interacts with F-actin and associates with the ARP2/3 complex. Interacts (via PDZ domain) with ARF1 (activated); the interaction blocks Arp2/3 complex inhibition. Interacts with SORCS3. Post-translationally, phosphorylation at Thr-82 appears to inhibit the interaction with AMPA receptors. Palmitoylation on Cys-413 is essential for long-term synaptic depression (LTD). In terms of tissue distribution, ubiquitous.

The protein localises to the cytoplasm. It localises to the perinuclear region. The protein resides in the membrane. Its subcellular location is the postsynaptic density. It is found in the synapse. The protein localises to the synaptosome. It localises to the cytoskeleton. Functionally, probable adapter protein that bind to and organize the subcellular localization of a variety of membrane proteins containing some PDZ recognition sequence. Involved in the clustering of various receptors, possibly by acting at the receptor internalization level. Plays a role in synaptic plasticity by regulating the trafficking and internalization of AMPA receptors. May be regulated upon PRKCA activation. May regulate ASIC1/ASIC3 channel. Regulates actin polymerization by inhibiting the actin-nucleating activity of the Arp2/3 complex; the function is competitive with nucleation promoting factors and is linked to neuronal morphology regulation and AMPA receptor (AMPAR) endocytosis. Via interaction with the Arp2/3 complex involved in regulation of synaptic plasicity of excitatory synapses and required for spine shrinkage during long-term depression (LTD). Involved in regulation of astrocyte morphology, antagonistic to Arp2/3 complex activator WASL/N-WASP function. The polypeptide is PRKCA-binding protein (PICK1) (Homo sapiens (Human)).